A 280-amino-acid polypeptide reads, in one-letter code: NAD(+) hydrolase TirS (280 aa).

Positions 22–94 form a coiled coil; sequence MNKLPDEIDR…KINLQKEQSR (73 aa). The 135-residue stretch at 141–275 folds into the TIR domain; that stretch reads IEYDVFLSHS…EIVEKIYQVI (135 aa). Residues 150 to 151 and Glu-180 each bind NAD(+); that span reads SS. Residue Glu-216 is part of the active site.

The protein resides in the secreted. It carries out the reaction NAD(+) + H2O = ADP-D-ribose + nicotinamide + H(+). It catalyses the reaction NADP(+) + H2O = ADP-D-ribose 2'-phosphate + nicotinamide + H(+). Functionally, virulence factor that suppresses host Toll-like receptor 2 (TLR2)-mediated NF-kappa-B signaling upon infection. NAD(+) hydrolase (NADase) that catalyzes cleavage of NAD(+) into ADP-D-ribose (ADPR) and nicotinamide. Also able to hydrolyze NADP(+), but not other NAD(+)-related molecules. Able to reduce NAD(+) levels in host cells. The protein is NAD(+) hydrolase TirS of Staphylococcus aureus (strain MSSA476).